A 311-amino-acid chain; its full sequence is Systemic RNA interference defective protein 2 (311 aa).

A signal peptide spans 1–20; it reads MPRFVYFCFALIALLPISWT. At 21 to 188 the chain is on the extracellular side; it reads MDGILITDVE…EETKTVVNKN (168 aa). The helical transmembrane segment at 189–209 threads the bilayer; that stretch reads GGAVAVAVIEGIALIAILAFL. Residues 210-311 are Cytoplasmic-facing; the sequence is GYRTMVNHKL…NDPFATLESW (102 aa). Positions 287-301 are enriched in polar residues; that stretch reads NSSAAQPSTTSNGQF. Residues 287 to 311 form a disordered region; it reads NSSAAQPSTTSNGQFNDPFATLESW.

As to expression, expressed in the intestinal lumen. Also present, at lower levels, in the excretory duct cells.

The protein localises to the apical cell membrane. It is found in the cytoplasm. Its function is as follows. Plays a role in RNA-mediated gene silencing by mediating endocytic uptake of double-stranded RNA (dsRNA) ingested from the environment into intestinal cells from the intestinal lumen. Selective for dsRNAs of at least 50 bp. Required for avoidance behavior induced by small RNAs derived from pathogenic bacteria such as P.aeruginosa. The polypeptide is Systemic RNA interference defective protein 2 (Caenorhabditis elegans).